A 907-amino-acid chain; its full sequence is MAAATAAAATVAGEGMEPRALQYEQTLMYGRYTQELGAFAKEEAARIRLGGPEPWKGSPSARATPELLEYGQSRCARCRICSVRCHKFLVSRVGEDWIFLVLLGLLMALVSWAMDYAIAVCLQAQQWMSRGLNTNILLQYLAWVTYPVVLITFSAGFTQILAPQAVGSGIPEMKTILRGVVLKEYLTLKTFVAKVIGLTCALGSGMPLGKEGPFVHIASMCAALLSKFLSLFGGIYENESRNTEMLAAACAVGVGCCFAAPIGGVLFSIEVTSTFFAVRNYWRGFFAATFSAFIFRVLAVWNRDEETITALFKTRFRLDFPFDLQELPAFAVIGIASGFGGALFVYLNRKIVQVMRKQKTINRFLMKKRLLFPALVTLLISTLTFPPGFGQFMAGQLSQKETLVTLFDNRTWVRQGLVEDLGAPSTSQAWSPPRANVFLTLVIFILMKFWMSALATTIPVPCGAFMPVFVIGAAFGRLVGESMAAWFPDGIHTDSSTYRIVPGGYAVVGAAALAGAVTHTVSTAVIVFELTGQIAHILPVMIAVILANAVAQSLQPSLYDSIIRIKKLPYLPELGWGRHQQYRVRVEDIMVRDVPHVALSCTFRDLRLALHRTKGRMLALVESPESMILLGSIERSQVVALLGAQLSPARRRQHMQKLRKAQMSPPSDQESPPSSETSIRFQVNTEDSGFPGAHGQTHKPLKPALKRGPSNATSLQEGTTGNMESAGIALRSLFCGSPPLESTTSELEKSESCDKRKLKRVRISLASDSDLEGKMSPEEILEWEEQQLDEPVNFSDCKIDPAPFQLVERTSLHKTHTIFSLLGVDHAYVTSIGRLIGIVTLKELRKAIEGSVTAQGVKVRPPLASFRDSATSSSDTETTEVHALWGPRSRHGLPREGTPSDSDDKCQ.

The Cytoplasmic segment spans residues 1-93 (MAAATAAAAT…RCHKFLVSRV (93 aa)). Positions 22–40 (QYEQTLMYGRYTQELGAFA) are essential for channel gating by both voltage and cell volume. Position 26 is a phosphothreonine (Thr26). The tract at residues 42–55 (EEAARIRLGGPEPW) is modulates channel gating by both voltage and cell volume. 2 consecutive transmembrane segments (helical) span residues 94-127 (GEDWIFLVLLGLLMALVSWAMDYAIAVCLQAQQW) and 136-161 (ILLQYLAWVTYPVVLITFSAGFTQIL). A Selectivity filter part_1 motif is present at residues 167 to 171 (GSGIP). The segment at residues 170–177 (IPEMKTIL) is an intramembrane region (helical). The next 2 helical transmembrane spans lie at 186-204 (LTLKTFVAKVIGLTCALGS) and 211-229 (EGPFVHIASMCAALLSKFL). Residues 209–213 (GKEGP) carry the Selectivity filter part_2 motif. Intramembrane regions (helical) lie at residues 245–257 (MLAAACAVGVGCC) and 261–269 (PIGGVLFSI). The next 5 membrane-spanning stretches (helical) occupy residues 281–301 (YWRGFFAATFSAFIFRVLAVW), 327–355 (LPAFAVIGIASGFGGALFVYLNRKIVQVM), 364–383 (FLMKKRLLFPALVTLLISTL), 435–455 (ANVFLTLVIFILMKFWMSALA), and 463–486 (GAFMPVFVIGAAFGRLVGESMAAW). The Selectivity filter part_3 signature appears at 463-467 (GAFMP). An intramembrane region (helical) is located at residues 503-517 (GGYAVVGAAALAGAV). The segment at residues 518-519 (TH) is an intramembrane region (note=Loop between two helices). Positions 520–531 (TVSTAVIVFELT) form an intramembrane region, helical. Residues 532-536 (GQIAH) constitute an intramembrane region (note=Loop between two helices). Residues 537 to 554 (ILPVMIAVILANAVAQSL) form a helical membrane-spanning segment. Topologically, residues 555-907 (QPSLYDSIIR…TPSDSDDKCQ (353 aa)) are cytoplasmic. One can recognise a CBS 1 domain in the interval 590-648 (MVRDVPHVALSCTFRDLRLALHRTKGRMLALVESPESMILLGSIERSQVVALLGAQLSP). Over residues 650-660 (RRRQHMQKLRK) the composition is skewed to basic residues. The disordered stretch occupies residues 650–720 (RRRQHMQKLR…NATSLQEGTT (71 aa)). Over residues 664 to 678 (SPPSDQESPPSSETS) the composition is skewed to low complexity. Over residues 696–705 (QTHKPLKPAL) the composition is skewed to basic residues. Positions 710 to 720 (SNATSLQEGTT) are enriched in polar residues. At Ser767 the chain carries Phosphoserine. One can recognise a CBS 2 domain in the interval 799 to 859 (IDPAPFQLVE…GSVTAQGVKV (61 aa)). The Basolateral membrane sorting motif lies at 821–822 (LL). The tract at residues 865 to 907 (SFRDSATSSSDTETTEVHALWGPRSRHGLPREGTPSDSDDKCQ) is disordered.

The protein belongs to the chloride channel (TC 2.A.49) family. ClC-2/CLCN2 subfamily. In terms of assembly, homodimer. Interacts with auxiliary subunit HEPACAM. Phosphorylated. Activated by dephosphorylation. Ubiquitously expressed. Expressed in neurons and glial cells (at protein level).

The protein localises to the cell membrane. Its subcellular location is the basolateral cell membrane. It localises to the cell projection. It is found in the dendritic spine membrane. The protein resides in the axon. It catalyses the reaction chloride(in) = chloride(out). The enzyme catalyses thiocyanate(in) = thiocyanate(out). It carries out the reaction bromide(in) = bromide(out). The catalysed reaction is nitrate(in) = nitrate(out). It catalyses the reaction iodide(out) = iodide(in). With respect to regulation, common gate kinetics are down-regulated by intracellular ATP. Inhibited by AK-42, a derivative of meclofenamate. Inhibited by Cd(2+). Inhibited by Zn(2+) and PKC activation. Inhibited at acidic pH. CCLN2:HEPACAM channel conductance is up-regulated upon hypo-osmolarity. Functionally, voltage-gated and osmosensitive chloride channel. Forms a homodimeric channel where each subunit has its own ion conduction pathway. Conducts double-barreled currents controlled by two types of gates, two fast glutamate gates that control each subunit independently and a slow common gate that opens and shuts off both subunits simultaneously. Displays inward rectification currents activated upon membrane hyperpolarization and extracellular hypotonicity. Contributes to chloride conductance involved in neuron excitability. In hippocampal neurons, generates a significant part of resting membrane conductance and provides an additional chloride efflux pathway to prevent chloride accumulation in dendrites upon GABA receptor activation. In glia, associates with the auxiliary subunit HEPACAM/GlialCAM at astrocytic processes and myelinated fiber tracts where it may regulate transcellular chloride flux buffering extracellular chloride and potassium concentrations. Regulates aldosterone production in adrenal glands. The opening of CLCN2 channels at hyperpolarized membrane potentials in the glomerulosa causes cell membrane depolarization, activation of voltage-gated calcium channels and increased expression of aldosterone synthase, the rate-limiting enzyme for aldosterone biosynthesis. Contributes to chloride conductance in retinal pigment epithelium involved in phagocytosis of shed photoreceptor outer segments and photoreceptor renewal. Conducts chloride currents at the basolateral membrane of epithelial cells with a role in chloride reabsorption rather than secretion. Permeable to small monovalent anions with chloride &gt; thiocyanate &gt; bromide &gt; nitrate &gt; iodide ion selectivity. This Rattus norvegicus (Rat) protein is Chloride channel protein 2 (Clcn2).